The primary structure comprises 322 residues: Putative pyruvyl transferase EpsO (322 aa).

This sequence belongs to the polysaccharide pyruvyl transferase family.

Its function is as follows. May be involved in the production of the exopolysaccharide (EPS) component of the extracellular matrix during biofilm formation. EPS is responsible for the adhesion of chains of cells into bundles. The protein is Putative pyruvyl transferase EpsO (epsO) of Bacillus subtilis (strain 168).